The following is a 244-amino-acid chain: 6-carboxyhexanoate--CoA ligase (244 aa).

This sequence belongs to the BioW family. Homodimer. The cofactor is Mg(2+).

The enzyme catalyses heptanedioate + ATP + CoA = 6-carboxyhexanoyl-CoA + AMP + diphosphate. The protein operates within metabolic intermediate metabolism; pimeloyl-CoA biosynthesis; pimeloyl-CoA from pimelate: step 1/1. Its function is as follows. Catalyzes the transformation of pimelate into pimeloyl-CoA with concomitant hydrolysis of ATP to AMP. This chain is 6-carboxyhexanoate--CoA ligase, found in Methanococcus maripaludis (strain DSM 14266 / JCM 13030 / NBRC 101832 / S2 / LL).